We begin with the raw amino-acid sequence, 320 residues long: MAKRTAPLLLLTLAVGLAGGSQGDREPVYRDCVLRCEERNCSGDALKHFRSRQPIYMSLAGWTCRDDCKYECMWFTVGLYLQEGHRVPQFHGKWPFSRFLFIQEPASAVASLLNGLASLVMLCRYRASVPASSPMYHTCMAFAWVSLNAWFWSTVFHTRDTDLTEKMDYFCASAVILHSVYLCCVRTVGLQHPSVASAFGALLLLLLTGHISYLSLVHFDYGYNMMANVAIGLVNLAWWLVWCLRNRQRLPHTRRCMVVVVLLQGLSLLELLDFPPLFWVLDAHAIWHISTIPVHTLFFRFLEDDSLYLLKESGAMFKLD.

Positions 1–23 (MAKRTAPLLLLTLAVGLAGGSQG) are cleaved as a signal peptide. The Lumenal portion of the chain corresponds to 24-98 (DREPVYRDCV…QFHGKWPFSR (75 aa)). N-linked (GlcNAc...) asparagine glycosylation is present at Asn40. Residues 99-119 (FLFIQEPASAVASLLNGLASL) form a helical membrane-spanning segment. The Cytoplasmic segment spans residues 120–135 (VMLCRYRASVPASSPM). Residues 136-156 (YHTCMAFAWVSLNAWFWSTVF) traverse the membrane as a helical segment. Residues 157–169 (HTRDTDLTEKMDY) are Lumenal-facing. The helical transmembrane segment at 170 to 190 (FCASAVILHSVYLCCVRTVGL) threads the bilayer. Topologically, residues 191–198 (QHPSVASA) are cytoplasmic. The chain crosses the membrane as a helical span at residues 199–219 (FGALLLLLLTGHISYLSLVHF). The Lumenal portion of the chain corresponds to 220 to 223 (DYGY). Residues 224–244 (NMMANVAIGLVNLAWWLVWCL) traverse the membrane as a helical segment. The Cytoplasmic segment spans residues 245–257 (RNRQRLPHTRRCM). The chain crosses the membrane as a helical span at residues 258 to 278 (VVVVLLQGLSLLELLDFPPLF). Position 279 (Trp279) is a topological domain, lumenal. The helical transmembrane segment at 280 to 299 (VLDAHAIWHISTIPVHTLFF) threads the bilayer. Over 300–320 (RFLEDDSLYLLKESGAMFKLD) the chain is Cytoplasmic.

Belongs to the PGAP3 family.

It localises to the golgi apparatus membrane. In terms of biological role, involved in the fatty acid remodeling steps of GPI-anchor maturation where the unsaturated acyl chain at sn-2 of inositol phosphate is replaced by a saturated stearoyl chain. May catalyze the first step of the fatty acid remodeling, by removing the unsaturated acyl chain at sn-2 of inositol phosphate, generating a lyso-GPI intermediate. The fatty acid remodeling steps is critical for the integration of GPI-APs into lipid rafts. In Mus musculus (Mouse), this protein is GPI-specific phospholipase A2-like PGAP3.